We begin with the raw amino-acid sequence, 215 residues long: MVLLTMIARVADGLPLAASMQEDEQSGRDLQQYQNQAKQLFRKLNEQSPTRCTLEAGAMTFHYLIEKGVCYLVLCEAAFPKKLAFAYLEDLFSEFDEQHGKKVPTVSRPYSFIEFDNYIQKTKKSYIDSRARRNLSSVNTELQDVQRIMVANIEEVLLRGEALSALDSKASNLSTLSKKYRQDAKYLNMRSTYAKLAAVAVFSVMLIVYIRFWWL.

Residues 1 to 190 (MVLLTMIARV…RQDAKYLNMR (190 aa)) are Cytoplasmic-facing. The region spanning 6–119 (MIARVADGLP…YSFIEFDNYI (114 aa)) is the Longin domain. One can recognise a v-SNARE coiled-coil homology domain in the interval 134–194 (NLSSVNTELQ…KYLNMRSTYA (61 aa)). A helical membrane pass occupies residues 191–213 (STYAKLAAVAVFSVMLIVYIRFW). Topologically, residues 214–215 (WL) are lumenal.

It belongs to the synaptobrevin family. As to quaternary structure, component of 2 distinct SNARE complexes.

The protein localises to the endoplasmic reticulum membrane. Its subcellular location is the endoplasmic reticulum-Golgi intermediate compartment membrane. The protein resides in the golgi apparatus. It is found in the cis-Golgi network membrane. It localises to the trans-Golgi network membrane. The protein localises to the melanosome. Its function is as follows. SNARE involved in targeting and fusion of ER-derived transport vesicles with the Golgi complex as well as Golgi-derived retrograde transport vesicles with the ER. The polypeptide is Vesicle-trafficking protein SEC22b (Xenopus tropicalis (Western clawed frog)).